Consider the following 575-residue polypeptide: Alpha-(1,6)-fucosyltransferase (575 aa).

Residues 1 to 9 (MRAWTGSWR) lie on the Cytoplasmic side of the membrane. Residues 10 to 30 (WIMLILFAWGTLLFYIGGHLV) form a helical; Signal-anchor for type II membrane protein membrane-spanning segment. Residues 31 to 575 (RDNDHPDHSS…KYPTYPEAEK (545 aa)) lie on the Lumenal side of the membrane. 3 disulfides stabilise this stretch: Cys-204–Cys-266, Cys-212–Cys-230, and Cys-218–Cys-222. A GT23 domain is found at 206-493 (KARKLVCNIN…PDASANFHSL (288 aa)). Phosphoserine is present on Ser-278. The short motif at 299-305 (PRPPYLP) is the SH3-binding element. An important for donor substrate binding region spans residues 365–366 (RR). A disulfide bridge connects residues Cys-465 and Cys-472. Residues 502–563 (QNAHNQIAVY…PSYKVREKIE (62 aa)) form the SH3 domain.

This sequence belongs to the glycosyltransferase 23 family. In terms of processing, tyrosine phosphorylated by PKDCC/VLK.

It is found in the golgi apparatus. The protein resides in the golgi stack membrane. It catalyses the reaction N(4)-{beta-D-GlcNAc-(1-&gt;2)-alpha-D-Man-(1-&gt;3)-[beta-D-GlcNAc-(1-&gt;2)-alpha-D-Man-(1-&gt;6)]-beta-D-Man-(1-&gt;4)-beta-D-GlcNAc-(1-&gt;4)-beta-D-GlcNAc}-L-asparaginyl-[protein] + GDP-beta-L-fucose = an N(4)-{beta-D-GlcNAc-(1-&gt;2)-alpha-D-Man-(1-&gt;3)-[beta-D-GlcNAc-(1-&gt;2)-alpha-D-Man-(1-&gt;6)]-beta-D-Man-(1-&gt;4)-beta-D-GlcNAc-(1-&gt;4)-[alpha-L-Fuc-(1-&gt;6)]-beta-D-GlcNAc}-L-asparaginyl-[protein] + GDP + H(+). It functions in the pathway protein modification; protein glycosylation. Catalyzes the addition of fucose in alpha 1-6 linkage to the first GlcNAc residue, next to the peptide chains in N-glycans. The protein is Alpha-(1,6)-fucosyltransferase (Fut8) of Rattus norvegicus (Rat).